The primary structure comprises 644 residues: Chaperone protein DnaK (644 aa).

Thr-200 carries the post-translational modification Phosphothreonine; by autocatalysis. Residues 603–644 form a disordered region; sequence VMAAEQAKSGGAAPGAAPGGAQQAAPDADVVDADFKEVDDKK. The segment covering 612–630 has biased composition (low complexity); sequence GGAAPGAAPGGAQQAAPDA. Residues 635–644 are compositionally biased toward basic and acidic residues; sequence ADFKEVDDKK.

The protein belongs to the heat shock protein 70 family.

Its function is as follows. Acts as a chaperone. This chain is Chaperone protein DnaK, found in Polynucleobacter asymbioticus (strain DSM 18221 / CIP 109841 / QLW-P1DMWA-1) (Polynucleobacter necessarius subsp. asymbioticus).